The following is a 491-amino-acid chain: Katanin p60 ATPase-containing subunit A1 (491 aa).

The tract at residues 1-29 (MSLLMITENVKLAREYALLGNYDSAMVYY) is interaction with KATNB1. The interval 1–75 (MSLLMITENV…VKEIMKTLES (75 aa)) is interaction with dynein and NDEL1. The interaction with microtubules stretch occupies residues 1–185 (MSLLMITENV…EPEANKFDST (185 aa)). The residue at position 42 (S42) is a Phosphoserine; by DYRK2. Residues 87–183 (QHELPSSEGE…VTEPEANKFD (97 aa)) are disordered. Over residues 145 to 169 (HSDRGKAVRSREKKEQSKGREEKNK) the composition is skewed to basic and acidic residues. Residue 249–256 (GPPGTGKT) coordinates ATP.

This sequence belongs to the AAA ATPase family. Katanin p60 subunit A1 subfamily. Can homooligomerize into hexameric rings, which may be promoted by interaction with microtubules. Interacts with KATNB1, which may serve as a targeting subunit. Interacts with ASPM; the katanin complex formation KATNA1:KATNB1 is required for the association of ASPM. Interacts with dynein and NDEL1. Associates with the E3 ligase complex containing DYRK2, EDD/UBR5, DDB1 and DCAF1 proteins (EDVP complex). Interacts with KLHL42 (via the kelch domains). Interacts with CUL3; the interaction is enhanced by KLHL42. Interacts with KATNB1 and KATNBL1. In terms of processing, phosphorylation by DYRK2 triggers ubiquitination and subsequent degradation. Post-translationally, ubiquitinated by the BCR(KLHL42) E3 ubiquitin ligase complex, leading to its proteasomal degradation. Ubiquitinated by the EDVP E3 ligase complex and subsequently targeted for proteasomal degradation.

Its subcellular location is the cytoplasm. The protein localises to the midbody. The protein resides in the cytoskeleton. It is found in the microtubule organizing center. It localises to the centrosome. Its subcellular location is the spindle pole. The protein localises to the spindle. It catalyses the reaction n ATP + n H2O + a microtubule = n ADP + n phosphate + (n+1) alpha/beta tubulin heterodimers.. ATPase activity is stimulated by microtubules, which promote homooligomerization. ATP-dependent microtubule severing is stimulated by interaction with KATNB1. Catalytic subunit of a complex which severs microtubules in an ATP-dependent manner. Microtubule severing may promote rapid reorganization of cellular microtubule arrays and the release of microtubules from the centrosome following nucleation. Microtubule release from the mitotic spindle poles may allow depolymerization of the microtubule end proximal to the spindle pole, leading to poleward microtubule flux and poleward motion of chromosome. Microtubule release within the cell body of neurons may be required for their transport into neuronal processes by microtubule-dependent motor proteins. This transport is required for axonal growth. This chain is Katanin p60 ATPase-containing subunit A1 (Katna1), found in Rattus norvegicus (Rat).